Here is a 91-residue protein sequence, read N- to C-terminus: Small ribosomal subunit protein bS20 (91 aa).

Belongs to the bacterial ribosomal protein bS20 family.

Functionally, binds directly to 16S ribosomal RNA. This chain is Small ribosomal subunit protein bS20, found in Thermosipho melanesiensis (strain DSM 12029 / CIP 104789 / BI429).